The chain runs to 353 residues: MTIALGKFTKDEKDLFDIMDDWLRRDRFVFVGWSGLLLFPCAYFALGGWFTGTTFVTSWYTHGLASSYLEGCNFLTAAVSTPANSLAHSLLLLWGPEAQGDFTRWCQLGGLWTFVALHGAFALIGFMLRQFEIARSVQLRPYNAIAFSGPIAVFVSVFLIYPLGQSGWFFAPSFGVAAIFRFILFFQGFHNWTLNPFHMMGVAGVLGAALLCAIHGATVENTLFEDGDGANTFRAFNPTQAEETYSMVTANRFWSQIFGVAFSNKRWLHFFMLFVPVTGLWMSALGVVGLALNLRAYDFVSQEIRAAEDPEFETFYTKNILLNEGIRAWMAAQDQPHENLIFPEEVLPRGNAL.

Thr2 carries the post-translational modification N-acetylthreonine. Phosphothreonine is present on Thr2. Residues 41 to 61 form a helical membrane-spanning segment; the sequence is CAYFALGGWFTGTTFVTSWYT. Residue His118 coordinates chlorophyll a. Residues 125–141 traverse the membrane as a helical segment; it reads GFMLRQFEIARSVQLRP. The pheophytin a site is built by Gln130 and Asn143. A helical transmembrane segment spans residues 153 to 166; the sequence is VFVSVFLIYPLGQS. His198 contributes to the chlorophyll a binding site. A helical membrane pass occupies residues 208 to 228; the sequence is AALLCAIHGATVENTLFEDGD. Positions 215 and 262 each coordinate a plastoquinone. Residue His215 coordinates Fe cation. Residue His269 participates in Fe cation binding. Residues 279 to 295 traverse the membrane as a helical segment; sequence GLWMSALGVVGLALNLR.

This sequence belongs to the reaction center PufL/M/PsbA/D family. As to quaternary structure, PSII is composed of 1 copy each of membrane proteins PsbA, PsbB, PsbC, PsbD, PsbE, PsbF, PsbH, PsbI, PsbJ, PsbK, PsbL, PsbM, PsbT, PsbX, PsbY, PsbZ, Psb30/Ycf12, at least 3 peripheral proteins of the oxygen-evolving complex and a large number of cofactors. It forms dimeric complexes. The D1/D2 heterodimer binds P680, chlorophylls that are the primary electron donor of PSII, and subsequent electron acceptors. It shares a non-heme iron and each subunit binds pheophytin, quinone, additional chlorophylls, carotenoids and lipids. There is also a Cl(-1) ion associated with D1 and D2, which is required for oxygen evolution. The PSII complex binds additional chlorophylls, carotenoids and specific lipids. is required as a cofactor.

It localises to the plastid. The protein resides in the chloroplast thylakoid membrane. It carries out the reaction 2 a plastoquinone + 4 hnu + 2 H2O = 2 a plastoquinol + O2. Functionally, photosystem II (PSII) is a light-driven water:plastoquinone oxidoreductase that uses light energy to abstract electrons from H(2)O, generating O(2) and a proton gradient subsequently used for ATP formation. It consists of a core antenna complex that captures photons, and an electron transfer chain that converts photonic excitation into a charge separation. The D1/D2 (PsbA/PsbD) reaction center heterodimer binds P680, the primary electron donor of PSII as well as several subsequent electron acceptors. D2 is needed for assembly of a stable PSII complex. The protein is Photosystem II D2 protein of Oenothera argillicola (Appalachian evening primrose).